Consider the following 303-residue polypeptide: MIKQRTLKNVVRATGVGVHTGEKVYLTLRPAPPNTGIIFCRTDLDPVVQIPARVNYIGDTSLSTCLTKGDVRIATVEHLLSALAGVGVDNLYIDLTSPELPIMDGSAGPFVFLIQSAGIEEQNAPKEFIRIKQRVKIEEADKSVMVEPYNGFKISFGIDFDHPLFNEHNQNATLDFSSTSYVKEVSRARTFGFLSDYEFIRKNNLALGASLDNALVLDEYKILNQDGLRYPDEFVKHKILDVIGDLYLLGRSLIGSFSGVKSGHTLNSQLLKQLLATKSAWEIVTFKDPSELPFAYTPVAMTA.

3 residues coordinate Zn(2+): H78, H237, and D241. H264 acts as the Proton donor in catalysis.

The protein belongs to the LpxC family. The cofactor is Zn(2+).

The enzyme catalyses a UDP-3-O-[(3R)-3-hydroxyacyl]-N-acetyl-alpha-D-glucosamine + H2O = a UDP-3-O-[(3R)-3-hydroxyacyl]-alpha-D-glucosamine + acetate. It participates in glycolipid biosynthesis; lipid IV(A) biosynthesis; lipid IV(A) from (3R)-3-hydroxytetradecanoyl-[acyl-carrier-protein] and UDP-N-acetyl-alpha-D-glucosamine: step 2/6. Functionally, catalyzes the hydrolysis of UDP-3-O-myristoyl-N-acetylglucosamine to form UDP-3-O-myristoylglucosamine and acetate, the committed step in lipid A biosynthesis. This chain is UDP-3-O-acyl-N-acetylglucosamine deacetylase, found in Coxiella burnetii (strain CbuG_Q212) (Coxiella burnetii (strain Q212)).